A 339-amino-acid chain; its full sequence is Tetracenomycin polyketide synthesis 8-O-methyl transferase TcmO (339 aa).

Residues aspartate 200 and 226-228 (GDF) contribute to the S-adenosyl-L-methionine site. Histidine 246 (proton acceptor) is an active-site residue.

This sequence belongs to the class I-like SAM-binding methyltransferase superfamily. Cation-independent O-methyltransferase family.

It functions in the pathway antibiotic biosynthesis; tetracenomycin C biosynthesis. This is Tetracenomycin polyketide synthesis 8-O-methyl transferase TcmO (tcmO) from Streptomyces glaucescens.